Reading from the N-terminus, the 690-residue chain is Exonuclease GOR (690 aa).

Disordered regions lie at residues 136–162 (TRVA…NRSG) and 567–690 (QPRH…SLHH). The span at 585–595 (APSTTAISPES) shows a compositional bias: polar residues. The span at 605-614 (KETGAVDGRR) shows a compositional bias: basic and acidic residues. Residues 612–626 (GRRGQKAKSNPNRPL) form a GOR14-1 epitope region. Over residues 631-646 (NPCRGPSGLSPSLCPS) the composition is skewed to low complexity. Over residues 661–682 (PPLPVPRVPAAPPRACPHPSAH) the composition is skewed to pro residues.

It belongs to the REXO1/REXO3 family.

Its subcellular location is the cytoplasm. The protein resides in the nucleus. The chain is Exonuclease GOR (REXO1L1) from Pan troglodytes (Chimpanzee).